Consider the following 298-residue polypeptide: Probable alpha-L-glutamate ligase (298 aa).

The 183-residue stretch at 108 to 290 folds into the ATP-grasp domain; that stretch reads LQLLLKTGVP…IAAEIIDYIE (183 aa). ATP contacts are provided by residues K144, 181 to 182, D190, and 214 to 216; these read DF and RAN. Mg(2+) is bound by residues D251, E263, and N265. 3 residues coordinate Mn(2+): D251, E263, and N265.

The protein belongs to the RimK family. Mg(2+) serves as cofactor. Requires Mn(2+) as cofactor.

This is Probable alpha-L-glutamate ligase from Haemophilus influenzae (strain PittEE).